The sequence spans 336 residues: Monoacylglycerol lipase ABHD6 (336 aa).

The Extracellular portion of the chain corresponds to 1–8; that stretch reads MDLDVVNM. The chain crosses the membrane as a helical; Signal-anchor for type II membrane protein span at residues 9–29; that stretch reads FVIAGGTLAIPILAFVASFLL. Residues 30–336 are Cytoplasmic-facing; it reads WPSALIRIYY…VHNTDNKKLN (307 aa). S148 (nucleophile) is an active-site residue. Active-site charge relay system residues include D278 and H306.

It belongs to the AB hydrolase superfamily. In terms of tissue distribution, widely expressed with higher expression in small intestine, liver and brown adipose tissue. In brain, expressed postsynaptically in cortical neurons but not detected in microglia (at protein level).

The protein localises to the late endosome membrane. The protein resides in the lysosome membrane. It localises to the mitochondrion membrane. The enzyme catalyses Hydrolyzes glycerol monoesters of long-chain fatty acids.. It catalyses the reaction 2-(5Z,8Z,11Z,14Z-eicosatetraenoyl)-glycerol + H2O = glycerol + (5Z,8Z,11Z,14Z)-eicosatetraenoate + H(+). The catalysed reaction is 1-octanoylglycerol + H2O = octanoate + glycerol + H(+). It carries out the reaction 1-decanoylglycerol + H2O = decanoate + glycerol + H(+). The enzyme catalyses 1-dodecanoylglycerol + H2O = dodecanoate + glycerol + H(+). It catalyses the reaction 1-tetradecanoylglycerol + H2O = tetradecanoate + glycerol + H(+). The catalysed reaction is 2-hexadecanoylglycerol + H2O = glycerol + hexadecanoate + H(+). It carries out the reaction 2-(9Z-octadecenoyl)-glycerol + H2O = glycerol + (9Z)-octadecenoate + H(+). The enzyme catalyses 1-(9Z-octadecenoyl)-glycerol + H2O = glycerol + (9Z)-octadecenoate + H(+). It catalyses the reaction 2-(9Z,12Z-octadecadienoyl)-glycerol + H2O = (9Z,12Z)-octadecadienoate + glycerol + H(+). The catalysed reaction is 1-(5Z,8Z,11Z,14Z-eicosatetraenoyl)-glycerol + H2O = glycerol + (5Z,8Z,11Z,14Z)-eicosatetraenoate + H(+). It carries out the reaction 1-(9Z,12Z-octadecadienoyl)-glycerol + H2O = (9Z,12Z)-octadecadienoate + glycerol + H(+). The enzyme catalyses 3-(9Z-octadecenoyl)-sn-glycero-1-phospho-(3'-(9Z-octadecenoyl)-1'-sn-glycerol) + H2O = 3-(9Z-octadecenoyl)-sn-glycero-1-phospho-(1'-sn-glycerol) + (9Z)-octadecenoate + H(+). It catalyses the reaction (S,S)-2-(9Z-octadecenoyl)-sn-glycero-1-phospho-(2'-(9Z-octadecenoyl)-1'-sn-glycerol) + H2O = (S,S)-2-(9Z-octadecenoyl)-sn-glycero-1-phospho-(1'-sn-glycerol) + (9Z)-octadecenoate + H(+). The catalysed reaction is (R,R)-2-(9Z-octadecenoyl)-sn-glycero-3-phospho-(2'-(9Z-octadecenoyl)-3'-sn-glycerol) + H2O = (R,R)-2-(9Z-octadecenoyl)-sn-glycero-3-phospho-(3'-sn-glycerol) + (9Z)-octadecenoate + H(+). Lipase that preferentially hydrolysis medium-chain saturated monoacylglycerols including 2-arachidonoylglycerol. Through 2-arachidonoylglycerol degradation may regulate endocannabinoid signaling pathways. Also has a lysophosphatidyl lipase activity with a preference for lysophosphatidylglycerol among other lysophospholipids. Also able to degrade bis(monoacylglycero)phosphate (BMP) and constitutes the major enzyme for BMP catabolism. BMP, also known as lysobisphosphatidic acid, is enriched in late endosomes and lysosomes and plays a key role in the formation of intraluminal vesicles and in lipid sorting. This Mus musculus (Mouse) protein is Monoacylglycerol lipase ABHD6.